The sequence spans 426 residues: 3-phosphoshikimate 1-carboxyvinyltransferase (426 aa).

Lys23, Ser24, and Arg28 together coordinate 3-phosphoshikimate. Lys23 is a phosphoenolpyruvate binding site. Phosphoenolpyruvate-binding residues include Gly96 and Arg124. Thr170, Ser171, Gln172, Ser198, Asp314, and Lys341 together coordinate 3-phosphoshikimate. A phosphoenolpyruvate-binding site is contributed by Gln172. Asp314 (proton acceptor) is an active-site residue. Positions 345, 386, and 411 each coordinate phosphoenolpyruvate.

It belongs to the EPSP synthase family. As to quaternary structure, monomer.

It is found in the cytoplasm. The enzyme catalyses 3-phosphoshikimate + phosphoenolpyruvate = 5-O-(1-carboxyvinyl)-3-phosphoshikimate + phosphate. It participates in metabolic intermediate biosynthesis; chorismate biosynthesis; chorismate from D-erythrose 4-phosphate and phosphoenolpyruvate: step 6/7. In terms of biological role, catalyzes the transfer of the enolpyruvyl moiety of phosphoenolpyruvate (PEP) to the 5-hydroxyl of shikimate-3-phosphate (S3P) to produce enolpyruvyl shikimate-3-phosphate and inorganic phosphate. The chain is 3-phosphoshikimate 1-carboxyvinyltransferase from Trichormus variabilis (strain ATCC 29413 / PCC 7937) (Anabaena variabilis).